Reading from the N-terminus, the 374-residue chain is Transcription factor IIIA (374 aa).

7 C2H2-type zinc fingers span residues 23 to 47, 53 to 77, 83 to 107, 113 to 138, 144 to 169, 204 to 226, and 236 to 261; these read FHCP…LRTH, FVCD…KRCH, FSCH…IEVH, YACT…SACH, YPCT…NRAH, PSCS…VVLH, and YHCP…SVIH. The C2H2-type 8; atypical zinc-finger motif lies at 267 to 291; that stretch reads FHCDSCGTKFGYKHMLQRHLERGTC. The C2H2-type 9 zinc-finger motif lies at 349 to 374; sequence YSCSFPECNYRFKRLYDMHRHLNSHH.

It localises to the nucleus. Is required for correct transcription of 5S RNA genes by RNA polymerase III. Also binds the transcribed 5S RNA's. Initiates transcription of the 5S ribosomal RNA gene. The sequence is that of Transcription factor IIIA (sfc2) from Schizosaccharomyces pombe (strain 972 / ATCC 24843) (Fission yeast).